Here is a 232-residue protein sequence, read N- to C-terminus: Ubiquinone biosynthesis O-methyltransferase (232 aa).

4 residues coordinate S-adenosyl-L-methionine: Arg-36, Gly-55, Asp-76, and Met-120.

This sequence belongs to the methyltransferase superfamily. UbiG/COQ3 family.

It carries out the reaction a 3-demethylubiquinol + S-adenosyl-L-methionine = a ubiquinol + S-adenosyl-L-homocysteine + H(+). The catalysed reaction is a 3-(all-trans-polyprenyl)benzene-1,2-diol + S-adenosyl-L-methionine = a 2-methoxy-6-(all-trans-polyprenyl)phenol + S-adenosyl-L-homocysteine + H(+). It functions in the pathway cofactor biosynthesis; ubiquinone biosynthesis. O-methyltransferase that catalyzes the 2 O-methylation steps in the ubiquinone biosynthetic pathway. This Burkholderia ambifaria (strain MC40-6) protein is Ubiquinone biosynthesis O-methyltransferase.